We begin with the raw amino-acid sequence, 507 residues long: ATP synthase subunit alpha, chloroplastic (507 aa).

170-177 (GDRQTGKT) is a binding site for ATP.

The protein belongs to the ATPase alpha/beta chains family. In terms of assembly, F-type ATPases have 2 components, CF(1) - the catalytic core - and CF(0) - the membrane proton channel. CF(1) has five subunits: alpha(3), beta(3), gamma(1), delta(1), epsilon(1). CF(0) has four main subunits: a, b, b' and c.

It is found in the plastid. Its subcellular location is the chloroplast thylakoid membrane. It catalyses the reaction ATP + H2O + 4 H(+)(in) = ADP + phosphate + 5 H(+)(out). Produces ATP from ADP in the presence of a proton gradient across the membrane. The alpha chain is a regulatory subunit. This chain is ATP synthase subunit alpha, chloroplastic, found in Chloranthus spicatus (Chulantree).